The sequence spans 64 residues: Translation machinery-associated protein 7 homolog (64 aa).

The interval 1–64 is disordered; the sequence is MSGREGGKKK…GGGIKKSGKK (64 aa). Over residues 27–38 the composition is skewed to basic and acidic residues; sequence MAFKQKQKEQQK. The stretch at 27-50 forms a coiled coil; it reads MAFKQKQKEQQKALEAAKANASKK. Residues 39 to 50 show a composition bias toward low complexity; the sequence is ALEAAKANASKK. A compositionally biased stretch (gly residues) spans 53–64; sequence LVGGGIKKSGKK.

In Drosophila melanogaster (Fruit fly), this protein is Translation machinery-associated protein 7 homolog.